A 253-amino-acid polypeptide reads, in one-letter code: uncharacterized protein (253 aa).

Over residues 175–184 the composition is skewed to polar residues; sequence NPTQTSPGKP. The interval 175–253 is disordered; sequence NPTQTSPGKP…ATENEDRLPS (79 aa). S180 is modified (phosphoserine). 2 stretches are compositionally biased toward low complexity: residues 185 to 196 and 203 to 214; these read STSESSQTDTST and TPTTTRASSYTT. Over residues 215–242 the composition is skewed to polar residues; sequence LVSTSNQVSNEAEASAVETSANQAQNTE.

This sequence belongs to the TRAPP small subunits family. BET3 subfamily.

This is an uncharacterized protein from Schizosaccharomyces pombe (strain 972 / ATCC 24843) (Fission yeast).